Reading from the N-terminus, the 86-residue chain is UPF0367 protein PMN2A_1492 (86 aa).

This sequence belongs to the UPF0367 family.

The polypeptide is UPF0367 protein PMN2A_1492 (Prochlorococcus marinus (strain NATL2A)).